The primary structure comprises 306 residues: Glutaminase (306 aa).

Ser-64, Asn-115, Glu-159, Asn-166, Tyr-190, Tyr-242, and Val-260 together coordinate substrate.

It belongs to the glutaminase family. Homotetramer.

The enzyme catalyses L-glutamine + H2O = L-glutamate + NH4(+). In Aliivibrio fischeri (strain ATCC 700601 / ES114) (Vibrio fischeri), this protein is Glutaminase.